The sequence spans 179 residues: Large ribosomal subunit protein uL5 (179 aa).

It belongs to the universal ribosomal protein uL5 family. In terms of assembly, part of the 50S ribosomal subunit; part of the 5S rRNA/L5/L18/L25 subcomplex. Contacts the 5S rRNA and the P site tRNA. Forms a bridge to the 30S subunit in the 70S ribosome.

In terms of biological role, this is one of the proteins that bind and probably mediate the attachment of the 5S RNA into the large ribosomal subunit, where it forms part of the central protuberance. In the 70S ribosome it contacts protein S13 of the 30S subunit (bridge B1b), connecting the 2 subunits; this bridge is implicated in subunit movement. Contacts the P site tRNA; the 5S rRNA and some of its associated proteins might help stabilize positioning of ribosome-bound tRNAs. The protein is Large ribosomal subunit protein uL5 of Bacillus cereus (strain G9842).